The chain runs to 63 residues: LPSLSADAEAPSKIDTAYYNGTKTXXAPVYQYQFGVGXIEXLTYVFKGSQYQDIESPTAYQSK.

N-linked (GlcNAc...) asparagine glycosylation occurs at asparagine 20.

Belongs to the type-B carboxylesterase/lipase family. As to expression, fat body, the site of their biosynthesis, and the hemolymph where it is secreted.

The catalysed reaction is juvenile hormone I + H2O = juvenile hormone I carboxylate + methanol + H(+). It catalyses the reaction juvenile hormone III + H2O = juvenile hormone III carboxylate + methanol + H(+). In terms of biological role, JH esterase plays a crucial role in the decrease of JH activity in lepidopteran insects, by hydrolyzing the methyl ester of JH. It is also involved in the transport of JH. This Trichoplusia ni (Cabbage looper) protein is Juvenile hormone esterase, isoform B.